We begin with the raw amino-acid sequence, 416 residues long: Enterobactin exporter EntS (416 aa).

Topologically, residues 1–21 (MNKQSWLLNLSLLKTHPAFRA) are cytoplasmic. A helical membrane pass occupies residues 22–42 (VFLARFISIVSLGLLGVAVPV). The Periplasmic segment spans residues 43 to 55 (QIQMMTHSTWLVG). The chain crosses the membrane as a helical span at residues 56 to 76 (LSVTLTGGAMFVGLMVGGVLA). Residues 77–83 (DRYERKK) lie on the Cytoplasmic side of the membrane. A helical membrane pass occupies residues 84 to 104 (VILLARGTCGIGFIGLCLNAL). At 105-109 (LPEPS) the chain is on the periplasmic side. A helical membrane pass occupies residues 110-130 (LLAIYLLGLWDGFFASLGVTA). The Cytoplasmic segment spans residues 131–156 (LLAATPALVGRENLMQAGAITMLTVR). The helical transmembrane segment at 157 to 177 (LGSVISPMIGGLLLATGGVAW) threads the bilayer. N178 is a topological domain (periplasmic). Residues 179–199 (YGLAAAGTFITLLPLLSLPAL) traverse the membrane as a helical segment. At 200–218 (PPPPQPREHPLKSLLAGFR) the chain is on the cytoplasmic side. The chain crosses the membrane as a helical span at residues 219 to 239 (FLLASPLVGGIALLGGLLTMA). The Periplasmic portion of the chain corresponds to 240 to 256 (SAVRVLYPALADNWQMS). Residues 257-277 (AAEIGFLYAAIPLGAAIGALT) traverse the membrane as a helical segment. Topologically, residues 278–287 (SGKLAHSARP) are cytoplasmic. A helical transmembrane segment spans residues 288–307 (GLLMLLSTLGSFLAIGLFGL). Topologically, residues 308 to 313 (MPMWIL) are periplasmic. The helical transmembrane segment at 314–336 (GVVCLALFGWLSAVSSLLQYTML) threads the bilayer. Residues 337 to 356 (QTQTPEAMLGRINGLWTAQN) are Cytoplasmic-facing. The helical transmembrane segment at 357 to 377 (VTGDAIGAALLGGLGAMMTPV) threads the bilayer. Position 378 (A378) is a topological domain, periplasmic. The chain crosses the membrane as a helical span at residues 379 to 399 (SASASGFGLLIIGVLLLLVLV). The Cytoplasmic portion of the chain corresponds to 400–416 (ELRRFRQTPPQVTASDS).

It belongs to the major facilitator superfamily. EntS (TC 2.A.1.38) family.

It localises to the cell inner membrane. Component of an export pathway for enterobactin. This Shigella boydii serotype 4 (strain Sb227) protein is Enterobactin exporter EntS.